The primary structure comprises 55 residues: Large ribosomal subunit protein bL33 (55 aa).

It belongs to the bacterial ribosomal protein bL33 family.

In Buchnera aphidicola subsp. Acyrthosiphon pisum (strain APS) (Acyrthosiphon pisum symbiotic bacterium), this protein is Large ribosomal subunit protein bL33 (rpmG).